A 649-amino-acid chain; its full sequence is Replication protein E1 (649 aa).

The short motif at 87-89 is the Nuclear localization signal element; sequence KRK. 2 positions are modified to phosphoserine; by host: Ser-93 and Ser-107. The short motif at 106–115 is the Nuclear export signal element; that stretch reads ISPRLKAICI. A DNA-binding region region spans residues 186–352; that stretch reads ICQTPLTNIL…QTVLQHSFND (167 aa). The SF3 helicase domain maps to 451–601; that stretch reads VEFMSFLTAL…FPFDENGNPV (151 aa). 477-484 is an ATP binding site; the sequence is GAANTGKS. Residue Lys-558 forms a Glycyl lysine isopeptide (Lys-Gly) (interchain with G-Cter in SUMO) linkage. The disordered stretch occupies residues 624-649; that stretch reads EDEDKENDGDSLPTFKCVSGQNTNTL.

This sequence belongs to the papillomaviridae E1 protein family. In terms of assembly, can form hexamers. Interacts with E2 protein; this interaction increases E1 DNA binding specificity. Interacts with host DNA polymerase subunit POLA2. Interacts with host single stranded DNA-binding protein RPA1. Interacts with host TOP1; this interaction stimulates the enzymatic activity of TOP1. Phosphorylated. In terms of processing, sumoylated.

It localises to the host nucleus. It catalyses the reaction Couples ATP hydrolysis with the unwinding of duplex DNA by translocating in the 3'-5' direction.. The catalysed reaction is ATP + H2O = ADP + phosphate + H(+). In terms of biological role, ATP-dependent DNA 3'-5' helicase required for initiation of viral DNA replication. It forms a complex with the viral E2 protein. The E1-E2 complex binds to the replication origin which contains binding sites for both proteins. During the initial step, a dimer of E1 interacts with a dimer of protein E2 leading to a complex that binds the viral origin of replication with high specificity. Then, a second dimer of E1 displaces the E2 dimer in an ATP-dependent manner to form the E1 tetramer. Following this, two E1 monomers are added to each half of the site, which results in the formation of two E1 trimers on the viral ori. Subsequently, two hexamers will be created. The double hexamer acts as a bi-directional helicase machinery and unwinds the viral DNA and then recruits the host DNA polymerase to start replication. In Human papillomavirus type 16, this protein is Replication protein E1.